Reading from the N-terminus, the 86-residue chain is Large ribosomal subunit protein bL27 (86 aa).

Residues 1–10 (MAQKKGGGST) show a composition bias toward gly residues. The disordered stretch occupies residues 1–21 (MAQKKGGGSTRNGRDSESKRL).

Belongs to the bacterial ribosomal protein bL27 family.

The chain is Large ribosomal subunit protein bL27 from Cupriavidus necator (strain ATCC 17699 / DSM 428 / KCTC 22496 / NCIMB 10442 / H16 / Stanier 337) (Ralstonia eutropha).